Here is a 379-residue protein sequence, read N- to C-terminus: Chaperone protein DnaJ (379 aa).

Residues 5-69 enclose the J domain; sequence DYYEVLGISK…NKRASYDQFG (65 aa). Residues 136–218 form a CR-type zinc finger; that stretch reads GTTKEISIRK…CHGKGTENKT (83 aa). Residues Cys-149, Cys-152, Cys-166, Cys-169, Cys-192, Cys-195, Cys-206, and Cys-209 each coordinate Zn(2+). CXXCXGXG motif repeat units lie at residues 149 to 156, 166 to 173, 192 to 199, and 206 to 213; these read CETCHGDG, CSYCNGAG, CPKCNGSG, and CPTCHGKG.

It belongs to the DnaJ family. Homodimer. The cofactor is Zn(2+).

Its subcellular location is the cytoplasm. In terms of biological role, participates actively in the response to hyperosmotic and heat shock by preventing the aggregation of stress-denatured proteins and by disaggregating proteins, also in an autonomous, DnaK-independent fashion. Unfolded proteins bind initially to DnaJ; upon interaction with the DnaJ-bound protein, DnaK hydrolyzes its bound ATP, resulting in the formation of a stable complex. GrpE releases ADP from DnaK; ATP binding to DnaK triggers the release of the substrate protein, thus completing the reaction cycle. Several rounds of ATP-dependent interactions between DnaJ, DnaK and GrpE are required for fully efficient folding. Also involved, together with DnaK and GrpE, in the DNA replication of plasmids through activation of initiation proteins. The chain is Chaperone protein DnaJ from Staphylococcus aureus (strain USA300 / TCH1516).